We begin with the raw amino-acid sequence, 340 residues long: Conidiation-specific protein 13 (340 aa).

The tract at residues 313-340 (AEAAAGISSGKPAADRKTKGKKGTKFRV) is disordered. The segment covering 330 to 340 (TKGKKGTKFRV) has biased composition (basic residues).

The polypeptide is Conidiation-specific protein 13 (con-13) (Neurospora crassa (strain ATCC 24698 / 74-OR23-1A / CBS 708.71 / DSM 1257 / FGSC 987)).